The sequence spans 488 residues: Regulatory protein ViaA (488 aa).

This sequence belongs to the ViaA family. Homodimer. Interacts with RavA.

The protein resides in the cytoplasm. Its function is as follows. Component of the RavA-ViaA chaperone complex, which may act on the membrane to optimize the function of some of the respiratory chains. ViaA stimulates the ATPase activity of RavA. This Yersinia pseudotuberculosis serotype O:1b (strain IP 31758) protein is Regulatory protein ViaA.